A 305-amino-acid polypeptide reads, in one-letter code: Glycine--tRNA ligase alpha subunit (305 aa).

The protein belongs to the class-II aminoacyl-tRNA synthetase family. As to quaternary structure, tetramer of two alpha and two beta subunits.

It localises to the cytoplasm. It catalyses the reaction tRNA(Gly) + glycine + ATP = glycyl-tRNA(Gly) + AMP + diphosphate. The polypeptide is Glycine--tRNA ligase alpha subunit (Streptococcus thermophilus (strain CNRZ 1066)).